We begin with the raw amino-acid sequence, 1087 residues long: Voltage-gated inwardly rectifying potassium channel KCNH3 (1087 aa).

At M1–D228 the chain is on the cytoplasmic side. Residues I18–H90 enclose the PAS domain. The PAC domain occupies F93–W145. The segment covering K137–G150 has biased composition (basic and acidic residues). Residues K137 to K161 are disordered. Residues G229–S249 traverse the membrane as a helical segment. At T250–G259 the chain is on the extracellular side. Residues P260 to F280 traverse the membrane as a helical segment. Residues R281–Y302 are Cytoplasmic-facing. A helical membrane pass occupies residues V303–F323. At K324–A331 the chain is on the extracellular side. Residues H332 to Y352 form a helical; Voltage-sensor membrane-spanning segment. Over S353 to T361 the chain is Cytoplasmic. A helical transmembrane segment spans residues L362 to G382. Residues Q383–I456 are Extracellular-facing. The interval S416–S436 is disordered. The segment covering G419–S431 has biased composition (low complexity). N421, N428, and N439 each carry an N-linked (GlcNAc...) asparagine glycan. Positions T457–N477 form an intramembrane region, pore-forming. The Selectivity filter signature appears at S468–N473. Over T478–K482 the chain is Extracellular. The chain crosses the membrane as a helical span at residues I483–V503. Residues T504–V1087 are Cytoplasmic-facing. An a nucleoside 3',5'-cyclic phosphate-binding site is contributed by L585–R700. Disordered regions lie at residues E733–P813 and L975–P1061. A compositionally biased stretch (basic residues) spans T776–P788.

The protein belongs to the potassium channel family. H (Eag) (TC 1.A.1.20) subfamily. Kv12.2/KCNH3 sub-subfamily. The potassium channel is probably composed of a homo- or heterotetrameric complex of pore-forming alpha subunits that can associate with modulating beta subunits. Interacts with KCNE1 and KCNE3; these interactions regulate KCNH3 trafficking to the plasma membrane and its subsequent voltage-gated potassium channel activity. In terms of processing, N-glycosylated. N-glycosylation mediates traffick to the cell membrane but is not necessary for voltage-gated potassium channel activity. Highly expressed in adult and embryonic brain, in particular in cerebellum, brain stem, hippocampus, cortex and striatum. Also found in pituitary.

Its subcellular location is the cell membrane. It catalyses the reaction K(+)(in) = K(+)(out). Functionally, pore-forming (alpha) subunit of a voltage-gated inwardly rectifying potassium channel. Charactherized by a fast rate of activation during depolarization followed by a rapid inactivation at much more depolarized value causing inward rectification due to a C-type inactivation mechanism. Exhibits a rapid recovery from inactivation. The polypeptide is Voltage-gated inwardly rectifying potassium channel KCNH3 (Rattus norvegicus (Rat)).